The sequence spans 393 residues: GDNF family receptor alpha-like (393 aa).

An N-terminal signal peptide occupies residues 1–19 (MLVFIFLAVTLSSENESSS). At 20–349 (QTNDCAHLIQ…LTGFNSFFNG (330 aa)) the chain is on the extracellular side. Residues Asn-59, Asn-65, Asn-101, and Asn-115 are each glycosylated (N-linked (GlcNAc...) asparagine). 11 disulfides stabilise this stretch: Cys-131/Cys-189, Cys-138/Cys-144, Cys-155/Cys-167, Cys-162/Cys-210, Cys-191/Cys-198, Cys-220/Cys-291, Cys-227/Cys-233, Cys-244/Cys-275, Cys-252/Cys-258, Cys-269/Cys-316, and Cys-293/Cys-304. Residues 149 to 228 (ALYLKACSAN…TCLSVIHTCR (80 aa)) are required for interaction with GDF15. A helical membrane pass occupies residues 350–370 (ELLYVVVCMAVTCGILFLVML). Topologically, residues 371–393 (KLRIQSEKRDPSSIEIAGGVIIQ) are cytoplasmic.

The protein belongs to the GDNFR family. In terms of assembly, interacts (via the extracellular domain) with GDF15 and RET; receptor of GDF15, mediates cellular signaling through interaction with RET after GDF15-binding. Interaction with RET requires previous GDF15-binding. In terms of processing, cleaved and inactivated by MMP14, inhibiting the GDF15-GFRAL aversive response. As to expression, expressed in the brainstem, restricted to cells in the area postrema and the immediately adjacent region of the nucleus tractus solitarius.

The protein localises to the cell membrane. Its activity is regulated as follows. Specifically inhibited by 3P10 monoclonal antibody. Strongly activated by LY3463251, a long-acting and stable agonist composed of GDF15 conjugated monomeric human IgG4 Fc. Its function is as follows. Brainstem-restricted receptor for GDF15 hormone, which triggers an aversive response, characterized by nausea, vomiting, and/or loss of appetite in response to various stresses. The aversive response is both required to reduce continuing exposure to those stresses at the time of exposure and to promote avoidance behavior in the future. The GDF15-GFRAL aversive response is triggered by stresses, such as anticancer drugs (camptothecin or cisplatin), cancers or drugs such as metformin. Upon interaction with its ligand, GDF15, mediates the GDF15-induced autophosphorylation and activation of the RET tyrosine kinase receptor, leading to activation of MAPK- and AKT- signaling pathways. Ligand-binding activates GFRAL-expressing neurons localized in the area postrema and nucleus tractus solitarius of the brainstem. The GDF15-GFRAL signal induces expression of genes involved in metabolism, such as lipid metabolism in adipose tissues. The chain is GDNF family receptor alpha-like (Gfral) from Mus musculus (Mouse).